Consider the following 427-residue polypeptide: MTDTNLDILSLTDPAIAGILQKELQRQRDHLELIASENFTSAAVMAAQGSVLTNKYAEGLPKKRYYGGCEYIDEAEQLAIDRVKRLFGANHANVQPHSGAQANFAVFLTLLQPGDTIMGMDLSHGGHLTHGSPVNVSGKWFRVVQYGVSPESERLDYDLILDIARKEKPKLIICGYSAYSRQIDFEKFRAIADEVGAYLMADIAHIAGLVATGHHPNPLPHCDVVTTTTHKTLRGPRGGLIMTKDEELGKKFDKSVFPGTQGGPLEHVVAAKAVAFGEALKPEFKIYSGQVIANAQALAGQLKARGIKIVTDGTDNHLMLLDLRSVGMTGKEADRLVSTINITANKNTVPFDPESPFVTSGLRLGSPAMTTRGLGETEFIEIGNIIADILLNPGDEALRTACRQRVAKLCESFPLYPHLHISVPALA.

Residues Leu122 and 126–128 (GHL) each bind (6S)-5,6,7,8-tetrahydrofolate. An N6-(pyridoxal phosphate)lysine modification is found at Lys231. (6S)-5,6,7,8-tetrahydrofolate contacts are provided by residues Glu247 and 355–357 (SPF).

It belongs to the SHMT family. Homodimer. It depends on pyridoxal 5'-phosphate as a cofactor.

The protein resides in the cytoplasm. The catalysed reaction is (6R)-5,10-methylene-5,6,7,8-tetrahydrofolate + glycine + H2O = (6S)-5,6,7,8-tetrahydrofolate + L-serine. It participates in one-carbon metabolism; tetrahydrofolate interconversion. Its pathway is amino-acid biosynthesis; glycine biosynthesis; glycine from L-serine: step 1/1. In terms of biological role, catalyzes the reversible interconversion of serine and glycine with tetrahydrofolate (THF) serving as the one-carbon carrier. This reaction serves as the major source of one-carbon groups required for the biosynthesis of purines, thymidylate, methionine, and other important biomolecules. Also exhibits THF-independent aldolase activity toward beta-hydroxyamino acids, producing glycine and aldehydes, via a retro-aldol mechanism. This is Serine hydroxymethyltransferase from Microcystis aeruginosa (strain NIES-843 / IAM M-2473).